The primary structure comprises 412 residues: Allantoate amidohydrolase (412 aa).

Positions 84, 95, 130, and 193 each coordinate Zn(2+). Arg-218, Asn-278, and Arg-291 together coordinate allantoate. His-385 lines the Zn(2+) pocket.

The protein belongs to the peptidase M20 family. In terms of assembly, homodimer. Zn(2+) is required as a cofactor.

It localises to the cytoplasm. It catalyses the reaction allantoate + H2O + 2 H(+) = (S)-2-ureidoglycine + NH4(+) + CO2. It functions in the pathway nitrogen metabolism; (S)-allantoin degradation. In terms of biological role, involved in the anaerobic nitrogen utilization via the assimilation of allantoin. Catalyzes specifically the hydrolysis of allantoate to yield CO2, NH3 and S-ureidoglycine, which is unstable and readily undergoes a second deamination by S-ureidoglycine aminohydrolase AllE to yield S-ureidoglycolate and NH3. In Bacillus subtilis (strain 168), this protein is Allantoate amidohydrolase.